The primary structure comprises 180 residues: Large ribosomal subunit protein uL5 (180 aa).

Belongs to the universal ribosomal protein uL5 family. Part of the 50S ribosomal subunit; part of the 5S rRNA/L5/L18/L25 subcomplex. Contacts the 5S rRNA and the P site tRNA. Forms a bridge to the 30S subunit in the 70S ribosome.

In terms of biological role, this is one of the proteins that bind and probably mediate the attachment of the 5S RNA into the large ribosomal subunit, where it forms part of the central protuberance. In the 70S ribosome it contacts protein S13 of the 30S subunit (bridge B1b), connecting the 2 subunits; this bridge is implicated in subunit movement. Contacts the P site tRNA; the 5S rRNA and some of its associated proteins might help stabilize positioning of ribosome-bound tRNAs. The sequence is that of Large ribosomal subunit protein uL5 from Streptococcus thermophilus (strain CNRZ 1066).